The chain runs to 309 residues: Protein FdhE (309 aa).

The protein belongs to the FdhE family.

The protein resides in the cytoplasm. Necessary for formate dehydrogenase activity. The chain is Protein FdhE from Escherichia coli O139:H28 (strain E24377A / ETEC).